A 301-amino-acid polypeptide reads, in one-letter code: Phosphoribosylaminoimidazole-succinocarboxamide synthase (301 aa).

It belongs to the SAICAR synthetase family.

The catalysed reaction is 5-amino-1-(5-phospho-D-ribosyl)imidazole-4-carboxylate + L-aspartate + ATP = (2S)-2-[5-amino-1-(5-phospho-beta-D-ribosyl)imidazole-4-carboxamido]succinate + ADP + phosphate + 2 H(+). It participates in purine metabolism; IMP biosynthesis via de novo pathway; 5-amino-1-(5-phospho-D-ribosyl)imidazole-4-carboxamide from 5-amino-1-(5-phospho-D-ribosyl)imidazole-4-carboxylate: step 1/2. The polypeptide is Phosphoribosylaminoimidazole-succinocarboxamide synthase (ADE1) (Cyberlindnera jadinii (Torula yeast)).